The sequence spans 457 residues: Adenylosuccinate synthetase isozyme 1 (457 aa).

Residues 1 to 21 (MSGTRASNDRPPGAGGVKRGR) are disordered. Residues 42–48 (GDEGKGK) and 70–72 (GHT) contribute to the GTP site. Residue Asp-43 is the Proton acceptor of the active site. Residues Asp-43 and Gly-70 each contribute to the Mg(2+) site. Substrate is bound at residue Asp-43. IMP-binding positions include 43-46 (DEGK), 68-71 (NAGH), Thr-163, Arg-177, Asn-256, Thr-271, and Arg-335. His-71 functions as the Proton donor in the catalytic mechanism. Residue 331 to 337 (VTTGRKR) coordinates substrate. GTP-binding positions include Arg-337, 363-365 (KLD), and 445-448 (GVGK).

Belongs to the adenylosuccinate synthetase family. In terms of assembly, homodimer. Mg(2+) is required as a cofactor. Predominantly expressed in skeletal muscle and heart, as well as in several hematopoietic cell lines and solid tumors.

Its subcellular location is the cytoplasm. It carries out the reaction IMP + L-aspartate + GTP = N(6)-(1,2-dicarboxyethyl)-AMP + GDP + phosphate + 2 H(+). The protein operates within purine metabolism; AMP biosynthesis via de novo pathway; AMP from IMP: step 1/2. Component of the purine nucleotide cycle (PNC), which interconverts IMP and AMP to regulate the nucleotide levels in various tissues, and which contributes to glycolysis and ammoniagenesis. Catalyzes the first committed step in the biosynthesis of AMP from IMP. This chain is Adenylosuccinate synthetase isozyme 1, found in Homo sapiens (Human).